We begin with the raw amino-acid sequence, 217 residues long: Probable GTP-binding protein EngB (217 aa).

Residues D40–G217 form the EngB-type G domain. GTP-binding positions include G48–S55, G75–E79, D95–G98, T162–D165, and T196–S198. Residues S55 and T77 each contribute to the Mg(2+) site.

It belongs to the TRAFAC class TrmE-Era-EngA-EngB-Septin-like GTPase superfamily. EngB GTPase family. The cofactor is Mg(2+).

In terms of biological role, necessary for normal cell division and for the maintenance of normal septation. The sequence is that of Probable GTP-binding protein EngB from Novosphingobium aromaticivorans (strain ATCC 700278 / DSM 12444 / CCUG 56034 / CIP 105152 / NBRC 16084 / F199).